The sequence spans 271 residues: Fatty acid elongase 2 (271 aa).

The helical transmembrane segment at 16–36 threads the bilayer; the sequence is WMIDNVDVAGFLCLLYLGLVW. Asparagine 52 carries an N-linked (GlcNAc...) asparagine glycan. Transmembrane regions (helical) follow at residues 59 to 79 and 110 to 130; these read VFIM…IVVV and FWVG…VLLV. Positions 140–144 match the HxxHH motif motif; sequence HWYHH. Histidine 143 acts as the Nucleophile in catalysis. The next 3 membrane-spanning stretches (helical) occupy residues 162-182, 194-214, and 241-261; these read IFVF…YFAM, IAPV…AVTM, and GVVM…ESYL.

Belongs to the ELO family.

It is found in the endoplasmic reticulum membrane. It carries out the reaction an acyl-CoA + malonyl-CoA + H(+) = a 3-oxoacyl-CoA + CO2 + CoA. It participates in lipid metabolism; fatty acid biosynthesis. Its function is as follows. Involved in the synthesis of fatty acids. Elongates C10 fatty acids to C14. This is Fatty acid elongase 2 from Trypanosoma brucei brucei (strain 927/4 GUTat10.1).